We begin with the raw amino-acid sequence, 492 residues long: Lipopolysaccharide biosynthesis protein WzxC (492 aa).

Topologically, residues 1 to 12 (MSLREKTISGAK) are cytoplasmic. Residues 13 to 33 (WSAIATVIIIGLGLVQMTVLA) traverse the membrane as a helical segment. Residues 34–42 (RIIDNHQFG) lie on the Periplasmic side of the membrane. A helical transmembrane segment spans residues 43–63 (LLTVSLVIIALADTLSDFGIA). Over 64–81 (NSIIQRKEISHLELTTLY) the chain is Cytoplasmic. Residues 82-102 (WLNVGLGIVVCVAVFLLSDLI) form a helical membrane-spanning segment. The Periplasmic segment spans residues 103 to 104 (GD). A helical membrane pass occupies residues 105–125 (VLNNPDLAPLIKTLSLAFVVI). Topologically, residues 126–157 (PHGQQFRALMQKELEFNKIGMIETSAVLAGFT) are cytoplasmic. A helical membrane pass occupies residues 158–178 (CTVVSAHFWPLAMTAILGYLV). At 179–236 (NSAVRTLLFGYFGRKIYRPGLHFSLASVAPNLRFGAWLTADSIINYLNTNLSTLVLAR) the chain is on the periplasmic side. The chain crosses the membrane as a helical span at residues 237-257 (ILGAGVAGGYNLAYNVAVVPP). Topologically, residues 258-288 (MKLNPIITRVLFPAFAKIQDDTEKLRVNFYK) are cytoplasmic. The chain crosses the membrane as a helical span at residues 289-309 (LLSVVGIINFPALLGLMVVSN). Residues 310–322 (NFVPLVFGEKWNS) are Periplasmic-facing. The helical transmembrane segment at 323-343 (IIPVLQLLCVVGLLRSVGNPI) threads the bilayer. Residues 344–364 (GSLLMAKARVDISFKFNVFKT) are Cytoplasmic-facing. Residues 365-385 (FLFIPAIVIGGQMAGAIGVTL) traverse the membrane as a helical segment. Position 386 (G386) is a topological domain, periplasmic. The helical transmembrane segment at 387–407 (FLLVQIINTILSYFVMIKPVL) threads the bilayer. Over 408–417 (GSSYRQYILS) the chain is Cytoplasmic. A helical transmembrane segment spans residues 418 to 438 (LWLPFYLSLPTLVVSYALGIV). Topologically, residues 439–445 (LKGQLAL) are periplasmic. Residues 446 to 466 (GMLLAVQIATGVLAFVVMIVL) traverse the membrane as a helical segment. The Cytoplasmic portion of the chain corresponds to 467 to 492 (SRHPLVVEVKRQFCRSEKMKMLLRAG).

The protein belongs to the polysaccharide synthase family.

It is found in the cell inner membrane. Its pathway is bacterial outer membrane biogenesis; lipopolysaccharide biosynthesis. The sequence is that of Lipopolysaccharide biosynthesis protein WzxC (wzxC) from Escherichia coli (strain K12).